A 196-amino-acid chain; its full sequence is Ribosome maturation factor RimM (196 aa).

Residues Q118–F196 enclose the PRC barrel domain.

The protein belongs to the RimM family. Binds ribosomal protein uS19.

Its subcellular location is the cytoplasm. In terms of biological role, an accessory protein needed during the final step in the assembly of 30S ribosomal subunit, possibly for assembly of the head region. Essential for efficient processing of 16S rRNA. May be needed both before and after RbfA during the maturation of 16S rRNA. It has affinity for free ribosomal 30S subunits but not for 70S ribosomes. In Alcanivorax borkumensis (strain ATCC 700651 / DSM 11573 / NCIMB 13689 / SK2), this protein is Ribosome maturation factor RimM.